Here is a 270-residue protein sequence, read N- to C-terminus: Putative phosphoenolpyruvate synthase regulatory protein (270 aa).

An ADP-binding site is contributed by 150-157 (GVSRCGKT).

It belongs to the pyruvate, phosphate/water dikinase regulatory protein family. PSRP subfamily.

It carries out the reaction [pyruvate, water dikinase] + ADP = [pyruvate, water dikinase]-phosphate + AMP + H(+). The enzyme catalyses [pyruvate, water dikinase]-phosphate + phosphate + H(+) = [pyruvate, water dikinase] + diphosphate. Bifunctional serine/threonine kinase and phosphorylase involved in the regulation of the phosphoenolpyruvate synthase (PEPS) by catalyzing its phosphorylation/dephosphorylation. This chain is Putative phosphoenolpyruvate synthase regulatory protein, found in Aeromonas salmonicida (strain A449).